Reading from the N-terminus, the 109-residue chain is Large ribosomal subunit protein uL23 (109 aa).

Belongs to the universal ribosomal protein uL23 family. In terms of assembly, part of the 50S ribosomal subunit. Contacts protein L29, and trigger factor when it is bound to the ribosome.

One of the early assembly proteins it binds 23S rRNA. One of the proteins that surrounds the polypeptide exit tunnel on the outside of the ribosome. Forms the main docking site for trigger factor binding to the ribosome. This is Large ribosomal subunit protein uL23 from Chlorobium phaeobacteroides (strain BS1).